The sequence spans 237 residues: Endonuclease V (237 aa).

Mg(2+)-binding residues include Asp46 and Asp114.

This sequence belongs to the endonuclease V family. The cofactor is Mg(2+).

It localises to the cytoplasm. It carries out the reaction Endonucleolytic cleavage at apurinic or apyrimidinic sites to products with a 5'-phosphate.. In terms of biological role, DNA repair enzyme involved in the repair of deaminated bases. Selectively cleaves double-stranded DNA at the second phosphodiester bond 3' to a deoxyinosine leaving behind the intact lesion on the nicked DNA. In Xanthomonas oryzae pv. oryzae (strain PXO99A), this protein is Endonuclease V.